The sequence spans 235 residues: Pyridoxine 5'-phosphate synthase (235 aa).

3-amino-2-oxopropyl phosphate is bound at residue N6. A 1-deoxy-D-xylulose 5-phosphate-binding site is contributed by 8–9 (DH). R17 serves as a coordination point for 3-amino-2-oxopropyl phosphate. The active-site Proton acceptor is the H42. 1-deoxy-D-xylulose 5-phosphate contacts are provided by R44 and H49. Residue E69 is the Proton acceptor of the active site. Residue T99 participates in 1-deoxy-D-xylulose 5-phosphate binding. H188 functions as the Proton donor in the catalytic mechanism. 3-amino-2-oxopropyl phosphate is bound by residues G189 and 210 to 211 (GH).

It belongs to the PNP synthase family. In terms of assembly, homooctamer; tetramer of dimers.

It is found in the cytoplasm. The catalysed reaction is 3-amino-2-oxopropyl phosphate + 1-deoxy-D-xylulose 5-phosphate = pyridoxine 5'-phosphate + phosphate + 2 H2O + H(+). It participates in cofactor biosynthesis; pyridoxine 5'-phosphate biosynthesis; pyridoxine 5'-phosphate from D-erythrose 4-phosphate: step 5/5. Catalyzes the complicated ring closure reaction between the two acyclic compounds 1-deoxy-D-xylulose-5-phosphate (DXP) and 3-amino-2-oxopropyl phosphate (1-amino-acetone-3-phosphate or AAP) to form pyridoxine 5'-phosphate (PNP) and inorganic phosphate. The sequence is that of Pyridoxine 5'-phosphate synthase from Wolbachia pipientis subsp. Culex pipiens (strain wPip).